Consider the following 312-residue polypeptide: 1-phosphofructokinase (312 aa).

Residues 223–228 (SLGAEG) and 254–255 (GD) each bind ATP. Asp255 serves as the catalytic Proton acceptor.

Belongs to the carbohydrate kinase PfkB family.

The enzyme catalyses beta-D-fructose 1-phosphate + ATP = beta-D-fructose 1,6-bisphosphate + ADP + H(+). Functionally, catalyzes the ATP-dependent phosphorylation of fructose-l-phosphate to fructose-l,6-bisphosphate. In Escherichia coli O157:H7, this protein is 1-phosphofructokinase (fruK).